The sequence spans 819 residues: Serine/threonine-protein phosphatase 1 regulatory subunit 10 (819 aa).

The TFIIS N-terminal domain occupies 73–147 (KLLNNWLTYA…NDWMAVIRSQ (75 aa)). Disordered stretches follow at residues 151–204 (QPAD…KFRS), 296–391 (KIKK…RKTV), and 495–785 (SVPD…GGDM). Basic and acidic residues-rich tracts occupy residues 153-165 (ADKE…EDAK) and 173-190 (KTSE…EKPK). Residues 305–327 (SPTSNKASPFDSKSPTEASSLTK) are compositionally biased toward polar residues. Residues 386 to 415 (KKRKTVSWPEESRLREYFYFELDETERVNV) carry the PP1-binding motif motif. Residues 495 to 504 (SVPDTPHEPD) show a composition bias toward basic and acidic residues. Composition is skewed to polar residues over residues 533-543 (MDQSTESQSPD) and 560-578 (MGSS…QEIL). Over residues 589–604 (KPEDLMKQPDFSEKIK) the composition is skewed to basic and acidic residues. The span at 606–618 (LLGSLQNQNQNQG) shows a compositional bias: low complexity. Pro residues-rich tracts occupy residues 635–663 (FPPP…PGPN) and 670–695 (HGPP…PPPN). Composition is skewed to basic and acidic residues over residues 704-715 (HGGERGGMRGGD) and 758-777 (HGDH…GDHR). The C3H1-type zinc-finger motif lies at 785–813 (MSTRPTCRHFMMKGNCRYENNCAFYHPGI).

In terms of assembly, component of the PNUTS-PP1 complex (also named PTW/PP1 complex).

Its subcellular location is the nucleus. It localises to the chromosome. Substrate-recognition component of the PNUTS-PP1 protein phosphatase complex, a protein phosphatase 1 (PP1) complex that promotes RNA polymerase II transcription pause-release, allowing transcription elongation. Promoter-proximal pausing by RNA polymerase II is a transcription halt following transcription initiation but prior to elongation, which acts as a checkpoint to control that transcripts are favorably configured for transcriptional elongation. The PNUTS-PP1 complex mediates the release of RNA polymerase II from promoter-proximal region of genes by catalyzing dephosphorylation of proteins involved in transcription. In some context, PPP1R10/PNUTS also acts as an inhibitor of protein phosphatase 1 (PP1) activity by preventing access to substrates. This is Serine/threonine-protein phosphatase 1 regulatory subunit 10 (ppp1r10) from Xenopus laevis (African clawed frog).